A 208-amino-acid polypeptide reads, in one-letter code: Na(+)-translocating NADH-quinone reductase subunit D (208 aa).

Transmembrane regions (helical) follow at residues Ile42–Val62, Ile72–Ala92, Val103–Met123, Leu131–Val151, and Asn178–Leu198.

It belongs to the NqrDE/RnfAE family. As to quaternary structure, composed of six subunits; NqrA, NqrB, NqrC, NqrD, NqrE and NqrF.

Its subcellular location is the cell inner membrane. It carries out the reaction a ubiquinone + n Na(+)(in) + NADH + H(+) = a ubiquinol + n Na(+)(out) + NAD(+). Functionally, NQR complex catalyzes the reduction of ubiquinone-1 to ubiquinol by two successive reactions, coupled with the transport of Na(+) ions from the cytoplasm to the periplasm. NqrA to NqrE are probably involved in the second step, the conversion of ubisemiquinone to ubiquinol. The sequence is that of Na(+)-translocating NADH-quinone reductase subunit D from Neisseria gonorrhoeae (strain ATCC 700825 / FA 1090).